We begin with the raw amino-acid sequence, 430 residues long: Enolase (430 aa).

Gln-162 contributes to the (2R)-2-phosphoglycerate binding site. Catalysis depends on Glu-204, which acts as the Proton donor. Positions 242, 289, and 316 each coordinate Mg(2+). Residues Lys-341, Arg-370, Ser-371, and Lys-392 each coordinate (2R)-2-phosphoglycerate. The Proton acceptor role is filled by Lys-341.

This sequence belongs to the enolase family. Mg(2+) serves as cofactor.

It localises to the cytoplasm. The protein resides in the secreted. Its subcellular location is the cell surface. The catalysed reaction is (2R)-2-phosphoglycerate = phosphoenolpyruvate + H2O. Its pathway is carbohydrate degradation; glycolysis; pyruvate from D-glyceraldehyde 3-phosphate: step 4/5. Catalyzes the reversible conversion of 2-phosphoglycerate (2-PG) into phosphoenolpyruvate (PEP). It is essential for the degradation of carbohydrates via glycolysis. The polypeptide is Enolase (Flavobacterium johnsoniae (strain ATCC 17061 / DSM 2064 / JCM 8514 / BCRC 14874 / CCUG 350202 / NBRC 14942 / NCIMB 11054 / UW101) (Cytophaga johnsonae)).